Consider the following 3498-residue polypeptide: Mediator of RNA polymerase II transcription subunit 12 (3498 aa).

6 disordered regions span residues 365-456 (IKQH…HTDI), 497-764 (GGVG…EPEK), 2209-2576 (AKKR…AYMK), 2589-2620 (ENNR…EAYA), 2637-2889 (LRKE…KEKQ), and 2917-3498 (NVAG…PNQY). Residues 368–394 (HEKRKAGSLKKSERRRRRGLSKNRPKK) show a composition bias toward basic residues. Residues 404-416 (SLDHDKVQIKQEP) show a composition bias toward basic and acidic residues. Composition is skewed to polar residues over residues 424-440 (GQQS…SHQY) and 512-536 (SNPT…SASP). Residues 539 to 570 (SVDKENECEKKEDESKTKEKNKDKEKDKEKEK) adopt a coiled-coil conformation. Composition is skewed to basic and acidic residues over residues 540–578 (VDKE…HTND) and 593–614 (ANDK…TGKE). Residues 621–630 (SKTAKTSTSA) show a composition bias toward low complexity. 3 stretches are compositionally biased toward basic and acidic residues: residues 691–719 (EVDK…KKAD), 738–764 (ESEK…EPEK), and 2209–2285 (AKKR…KRAS). The interval 2142–3498 (QTTRLDKVAK…YPNQQPPNQY (1357 aa)) is required for nuclear localization. The stretch at 2203–2290 (VIDEEEAKKR…EKRASDAAAA (88 aa)) forms a coiled coil. Composition is skewed to low complexity over residues 2342–2360 (RADT…APIA) and 2409–2431 (LADA…SSMP). The stretch at 2395-2420 (RNLLNRKKEEKRNSLADASAAAAAAN) forms a coiled coil. Residues 2444–2456 (QSAGATQQLQGMQ) show a composition bias toward polar residues. Low complexity predominate over residues 2459-2479 (QMGGSMSGMNQNMGGMNQSMS). Over residues 2514-2530 (NRSSGPVSSETRQQIME) the composition is skewed to polar residues. 3 stretches are compositionally biased toward basic and acidic residues: residues 2547–2576 (QKQR…AYMK), 2589–2616 (ENNR…RAAE), and 2637–2724 (LRKE…EQQR). Residues 2725 to 2770 (RSQQNPYMNQQGQYSQQPPPSYQQSSYPNNYQPGQQGNQPPNYQQP) show a composition bias toward low complexity. Residues 2771 to 2783 (SHQSMQQGHQAGY) are compositionally biased toward polar residues. Low complexity predominate over residues 2784–2810 (QQTSNQMQMNMQQQQNRQQGGPQQSFS). Composition is skewed to polar residues over residues 2816–2827 (NQPSQPGYSGYN), 2842–2852 (RNPFGNQQDMQ), 2868–2881 (HAQQ…QLSL), and 2926–2956 (GQQQ…SSNP). Residues 2957-2993 (QGGMQSYQQQQPVLGQPGPIQTGQSTQQQIPAQSQQQ) are compositionally biased toward low complexity. Positions 2994-3009 (YNSGRPQMHTTPTKND) are enriched in polar residues. Low complexity predominate over residues 3039–3100 (GQNVPGGYQQ…NVSQSQSAAQ (62 aa)). Positions 3103–3127 (RPSQDSAYQQSGYNQTGNQSYQRPD) are enriched in polar residues. 2 stretches are compositionally biased toward low complexity: residues 3128 to 3184 (QQQQ…SAQY) and 3192 to 3223 (QGYD…QTQQ). Residues 3231-3253 (SGYTANSGGSSNILNQSMEESGL) are compositionally biased toward polar residues. Residues 3254–3311 (NQGFSGASSNASSQQGGSSQMQQSGYGMPGNQMQMQQNQKQQVQRGMPTGMGQTNMGQ) show a composition bias toward low complexity. Residues 3312 to 3321 (SGMGQSGMGQ) show a composition bias toward gly residues. Low complexity-rich tracts occupy residues 3336 to 3356 (QGQQ…NQRG) and 3370 to 3408 (QQQH…QGQQ). Positions 3414–3425 (PSQQQSGAAYSN) are enriched in polar residues. The span at 3426–3436 (QMQFQGVRQGQ) shows a compositional bias: low complexity. Gly residues predominate over residues 3437–3446 (QGMGGMGGSG). Residues 3447 to 3498 (QQQPQTQPHGSNQYYQQQQDQRMQQQPQQPGQQQQHGYGMGQYPNQQPPNQY) are compositionally biased toward low complexity.

This sequence belongs to the Mediator complex subunit 12 family. In terms of assembly, component of the Mediator complex. Ubiquitously expressed.

The protein resides in the nucleus. In terms of biological role, component of the Mediator complex, a coactivator involved in regulated gene transcription of nearly all RNA polymerase II-dependent genes. Mediator functions as a bridge to convey information from gene-specific regulatory proteins to the basal RNA polymerase II transcription machinery. Mediator is recruited to promoters by direct interactions with regulatory proteins and serves as a scaffold for the assembly of a functional preinitiation complex with RNA polymerase II and the general transcription factors. Functions downstream of let-60 during vulval induction. Required for asymmetric division of T-cells and for hypodermal development. In Caenorhabditis elegans, this protein is Mediator of RNA polymerase II transcription subunit 12 (dpy-22).